The chain runs to 375 residues: Alpha-2,8-sialyltransferase 8B (375 aa).

The Cytoplasmic segment spans residues 1–6; that stretch reads MQLQFR. A helical; Signal-anchor for type II membrane protein transmembrane segment spans residues 7-23; sequence SWMLAALTLLVVFLIFA. Topologically, residues 24–375 are lumenal; it reads DISEIEEEIG…LTVGQCDGAT (352 aa). 4 N-linked (GlcNAc...) asparagine glycosylation sites follow: Asn60, Asn72, Asn89, and Asn134. Cystine bridges form between Cys157–Cys307 and Cys171–Cys371. Residues Asn162 and Asn185 each coordinate CMP-N-acetyl-beta-neuraminate. N-linked (GlcNAc...) asparagine glycans are attached at residues Asn219 and Asn234. Residues Thr294, Thr295, Gly296, Trp316, Tyr329, and His330 each coordinate CMP-N-acetyl-beta-neuraminate. Residue His346 is the Proton donor/acceptor of the active site.

It belongs to the glycosyltransferase 29 family. In terms of processing, autopolysialylated. Autopolysialylation is not a prerequisite for the polysialylation acitity, but enhances the polysialylation acitity. Highly expressed in fetal brain, kidney and heart and to a much lesser extent in adult heart and thymus.

Its subcellular location is the golgi apparatus membrane. It is found in the secreted. The protein resides in the cell membrane. It carries out the reaction [N-acetyl-alpha-D-neuraminosyl-(2-&gt;8)](n) + CMP-N-acetyl-beta-neuraminate = [N-acetyl-alpha-D-neuraminosyl-(2-&gt;8)](n+1) + CMP + H(+). The protein operates within protein modification; protein glycosylation. Functionally, catalyzes the transfer of a sialic acid from a CMP-linked sialic acid donor onto a terminal alpha-2,3-, alpha-2,6-, or alpha-2,8-linked sialic acid of an N-linked glycan acceptor through alpha-2,8-linkages. Therefore, participates in polysialic acid synthesis on various sialylated N-acetyllactosaminyl oligosaccharides (alpha-2,3-, alpha-2,6-, or alpha-2,8-linked sialic acid), including NCAM1, NCAM1 N-glycans, FETUB N-glycans, and to a lesser extent sialylparagloboside (SPG) and AHSG, which does not require the initial addition of an alpha 2,8-sialic acid. However, does not exhibit sialic acid-polymerase activity. Catalyzes polysialic acid synthesis in the hippocampal on NCAM1 and supports neurite outgrowth. ST8SIA2-mediated polysialylation influences on oligodendrocyte differentiation and may promote the integrity of myelin and axons. The polypeptide is Alpha-2,8-sialyltransferase 8B (Homo sapiens (Human)).